A 610-amino-acid polypeptide reads, in one-letter code: Transcription termination factor Rho (610 aa).

Residues 117 to 227 are disordered; it reads EVSRRERRGA…GDGAEAELRQ (111 aa). Residues 118-131 show a composition bias toward basic and acidic residues; that stretch reads VSRRERRGASREAD. The segment covering 178-187 has biased composition (polar residues); the sequence is GVEQQSSSLQ. Residues 189-198 are compositionally biased toward basic and acidic residues; it reads RGDDDGEGRQ. Residues 199 to 214 are compositionally biased toward basic residues; that stretch reads GRRGRRFRDRDRRRRG. A compositionally biased stretch (basic and acidic residues) spans 215 to 227; it reads ERSGDGAEAELRQ. One can recognise a Rho RNA-BD domain in the interval 231–309; it reads VQPVAGILDV…VRLDSINGGS (79 aa). ATP-binding positions include 352-357, 364-369, and Arg-395; these read GKGQRA and KAGKTT.

Belongs to the Rho family. In terms of assembly, homohexamer. The homohexamer assembles into an open ring structure.

Its function is as follows. Facilitates transcription termination by a mechanism that involves Rho binding to the nascent RNA, activation of Rho's RNA-dependent ATPase activity, and release of the mRNA from the DNA template. The polypeptide is Transcription termination factor Rho (Mycobacterium leprae (strain TN)).